The sequence spans 151 residues: Sperm surface protein Sp17 (151 aa).

Basic and acidic residues predominate over residues 68-98 (FYNNHAFEEQEPPEKSDPKQEESQIPGKEEE). 2 disordered regions span residues 68–115 (FYNN…EKEE) and 130–151 (AREEVKKMKTDSLQNEEKEENK). The 30-residue stretch at 114-143 (EEVAAVKIQAAFRGHVAREEVKKMKTDSLQ) folds into the IQ domain.

In terms of assembly, homodimer. May interact with ROPN1. In terms of tissue distribution, testis- and sperm-specific.

Its subcellular location is the membrane. Sperm surface zona pellucida binding protein. Helps to bind spermatozoa to the zona pellucida with high affinity. Might function in binding zona pellucida and carbohydrates. The chain is Sperm surface protein Sp17 (SPA17) from Macaca fascicularis (Crab-eating macaque).